The primary structure comprises 797 residues: Discoidin domain-containing receptor tyrosine kinase B (797 aa).

Residues 1–19 form the signal peptide; it reads MKLLLYLFGVTFHSNTVVA. Topologically, residues 20-384 are extracellular; sequence LELRECSHQL…VTEHDDGTSM (365 aa). Residues 25-181 enclose the F5/8 type C domain; sequence CSHQLGMSNR…VCMRVEVFGC (157 aa). A disulfide bond links cysteine 25 and cysteine 181. Positions 46-66 are disordered; that stretch reads SFDLQSTGPQHARAHQESGSG. N-linked (GlcNAc...) asparagine glycosylation is found at asparagine 141, asparagine 167, asparagine 264, and asparagine 353. Residues 385-405 form a helical membrane-spanning segment; that stretch reads FAFIIFFFMFLIVAVIILTVL. Residues 406–797 lie on the Cytoplasmic side of the membrane; it reads YRKREYRVKA…LVHTSPHIHF (392 aa). The 259-residue stretch at 527-785 folds into the Protein kinase domain; it reads LICVSRIGQG…PSFENVHLHL (259 aa). Residues 533–541 and lysine 554 each bind ATP; that span reads IGQGEFGEV. Aspartate 645 serves as the catalytic Proton acceptor.

This sequence belongs to the protein kinase superfamily. Tyr protein kinase family. Insulin receptor subfamily. In terms of assembly, interacts with shc-1. Autophosphorylated on tyrosine residues. Post-translationally, N-glycosylation at Asn-141 is required for axon regeneration after injury but is dispensable for kinase activity and axon localization. Expressed in some neurons in head and tail, some motoneurons in ventral nerve cord, in PVP interneurons, seam cells, rectal gland cells, vulva cells and some non-neuronal cells in the tail. Expressed in D-type motor neurons.

Its subcellular location is the cell membrane. It localises to the cell projection. The protein localises to the axon. It is found in the perikaryon. The catalysed reaction is L-tyrosyl-[protein] + ATP = O-phospho-L-tyrosyl-[protein] + ADP + H(+). Functionally, tyrosine-protein kinase receptor which, together with ddr-1, is involved in axon guidance to establish the tracts for the ventral and dorsal nerve cords during nervous system development. Acts upstream of the adapter shc-1, and the tyrosine kinase receptors svh-1 and svh-2 to regulate axon regeneration following injury in D-type motor neurons. May mediate axon regeneration in association with the collagen emb-9. This chain is Discoidin domain-containing receptor tyrosine kinase B, found in Caenorhabditis elegans.